A 106-amino-acid chain; its full sequence is uncharacterized protein (106 aa).

The segment covering 24-35 has biased composition (polar residues); it reads ANSISSTSFYHK. 2 disordered regions span residues 24–49 and 65–87; these read ANSISSTSFYHKSSNNNSHANASCEE and LTAESSNHHSLSASNQPASSSDE. Composition is skewed to low complexity over residues 36–46 and 74–85; these read SSNNNSHANAS and SLSASNQPASSS.

This is an uncharacterized protein from Arabidopsis thaliana (Mouse-ear cress).